We begin with the raw amino-acid sequence, 89 residues long: Small ribosomal subunit protein uS15 (89 aa).

It belongs to the universal ribosomal protein uS15 family. Part of the 30S ribosomal subunit. Forms a bridge to the 50S subunit in the 70S ribosome, contacting the 23S rRNA.

Its function is as follows. One of the primary rRNA binding proteins, it binds directly to 16S rRNA where it helps nucleate assembly of the platform of the 30S subunit by binding and bridging several RNA helices of the 16S rRNA. Forms an intersubunit bridge (bridge B4) with the 23S rRNA of the 50S subunit in the ribosome. This is Small ribosomal subunit protein uS15 from Bacillus anthracis (strain CDC 684 / NRRL 3495).